A 279-amino-acid chain; its full sequence is MAFIQEIKRRMNTVKSTIKITNAMKMVSRAKFIKFKKQFQEISLFFNEFYKAVGQVVVSLKEPKKKPDNQKTLWIMMSSSLGLCGQHNSNMNKLLKANFKADDKIFFLGRKNQSFWNKNSQYNPAVGFIDIQDRDINFDYCQTIFDQIMDAFKEFKLDRICMVYTKFKNSLIQQSQLFQVFPFDVETFKTLNPVVTDQQLDFEPDQATIINLITPQFFDVALYGGLVETKLCESASRQNAMEAATKNAKDLLDKYTLQFNKLRQNSITEEIIEVIGGMN.

This sequence belongs to the ATPase gamma chain family. F-type ATPases have 2 components, CF(1) - the catalytic core - and CF(0) - the membrane proton channel. CF(1) has five subunits: alpha(3), beta(3), gamma(1), delta(1), epsilon(1). CF(0) has three main subunits: a, b and c.

The protein localises to the cell membrane. Produces ATP from ADP in the presence of a proton gradient across the membrane. The gamma chain is believed to be important in regulating ATPase activity and the flow of protons through the CF(0) complex. This chain is ATP synthase gamma chain, found in Mycoplasma genitalium (strain ATCC 33530 / DSM 19775 / NCTC 10195 / G37) (Mycoplasmoides genitalium).